The primary structure comprises 819 residues: Ribosome-releasing factor 2, mitochondrial (819 aa).

Residues 1–30 (MWKWNVRRWAGARVNISKNRLSVINVGSRY) constitute a mitochondrion transit peptide. Residues 39 to 327 (SKVRNIGIIA…AIVNYLPSPI (289 aa)) form the tr-type G domain. GTP contacts are provided by residues 48–55 (AHIDAGKT), 113–117 (DTPGH), and 165–168 (NKMD).

It belongs to the TRAFAC class translation factor GTPase superfamily. Classic translation factor GTPase family. EF-G/EF-2 subfamily.

It is found in the mitochondrion. In terms of biological role, mitochondrial GTPase that mediates the disassembly of ribosomes from messenger RNA at the termination of mitochondrial protein biosynthesis. Not involved in the GTP-dependent ribosomal translocation step during translation elongation. This chain is Ribosome-releasing factor 2, mitochondrial, found in Saccharomyces cerevisiae (strain RM11-1a) (Baker's yeast).